Here is a 337-residue protein sequence, read N- to C-terminus: Holliday junction branch migration complex subunit RuvB (337 aa).

The interval 1–182 (MEDRMVSASY…FGVLSAMEFY (182 aa)) is large ATPase domain (RuvB-L). 9 residues coordinate ATP: Leu21, Arg22, Gly63, Lys66, Thr67, Thr68, Arg172, Tyr182, and Arg219. Residue Thr67 coordinates Mg(2+). The segment at 183-253 (NEDELKEIIL…IAKNALSLLE (71 aa)) is small ATPAse domain (RuvB-S). Residues 256–337 (GEGFDKIDNK…REFKEQTKLT (82 aa)) are head domain (RuvB-H). Positions 311 and 316 each coordinate DNA.

This sequence belongs to the RuvB family. Homohexamer. Forms an RuvA(8)-RuvB(12)-Holliday junction (HJ) complex. HJ DNA is sandwiched between 2 RuvA tetramers; dsDNA enters through RuvA and exits via RuvB. An RuvB hexamer assembles on each DNA strand where it exits the tetramer. Each RuvB hexamer is contacted by two RuvA subunits (via domain III) on 2 adjacent RuvB subunits; this complex drives branch migration. In the full resolvosome a probable DNA-RuvA(4)-RuvB(12)-RuvC(2) complex forms which resolves the HJ.

The protein resides in the cytoplasm. It carries out the reaction ATP + H2O = ADP + phosphate + H(+). The RuvA-RuvB-RuvC complex processes Holliday junction (HJ) DNA during genetic recombination and DNA repair, while the RuvA-RuvB complex plays an important role in the rescue of blocked DNA replication forks via replication fork reversal (RFR). RuvA specifically binds to HJ cruciform DNA, conferring on it an open structure. The RuvB hexamer acts as an ATP-dependent pump, pulling dsDNA into and through the RuvAB complex. RuvB forms 2 homohexamers on either side of HJ DNA bound by 1 or 2 RuvA tetramers; 4 subunits per hexamer contact DNA at a time. Coordinated motions by a converter formed by DNA-disengaged RuvB subunits stimulates ATP hydrolysis and nucleotide exchange. Immobilization of the converter enables RuvB to convert the ATP-contained energy into a lever motion, pulling 2 nucleotides of DNA out of the RuvA tetramer per ATP hydrolyzed, thus driving DNA branch migration. The RuvB motors rotate together with the DNA substrate, which together with the progressing nucleotide cycle form the mechanistic basis for DNA recombination by continuous HJ branch migration. Branch migration allows RuvC to scan DNA until it finds its consensus sequence, where it cleaves and resolves cruciform DNA. This is Holliday junction branch migration complex subunit RuvB from Clostridium novyi (strain NT).